Consider the following 539-residue polypeptide: Phosphoenolpyruvate carboxykinase (ATP) (539 aa).

Substrate contacts are provided by R64, Y206, and K212. Residues K212, H231, and 247 to 255 (GLSGTGKTT) each bind ATP. K212 and H231 together coordinate Mn(2+). Residue D268 coordinates Mn(2+). Residues E296, R332, 448 to 449 (RI), and T454 each bind ATP. Position 332 (R332) interacts with substrate.

Belongs to the phosphoenolpyruvate carboxykinase (ATP) family. Monomer. Mn(2+) is required as a cofactor.

The protein localises to the cytoplasm. The catalysed reaction is oxaloacetate + ATP = phosphoenolpyruvate + ADP + CO2. It functions in the pathway carbohydrate biosynthesis; gluconeogenesis. In terms of biological role, involved in the gluconeogenesis. Catalyzes the conversion of oxaloacetate (OAA) to phosphoenolpyruvate (PEP) through direct phosphoryl transfer between the nucleoside triphosphate and OAA. The sequence is that of Phosphoenolpyruvate carboxykinase (ATP) from Pectobacterium atrosepticum (strain SCRI 1043 / ATCC BAA-672) (Erwinia carotovora subsp. atroseptica).